Consider the following 447-residue polypeptide: Adenylosuccinate synthetase (447 aa).

Residues 12–18 (GDEGKGK) and 40–42 (GHT) contribute to the GTP site. Catalysis depends on D13, which acts as the Proton acceptor. Positions 13 and 40 each coordinate Mg(2+). IMP contacts are provided by residues 13-16 (DEGK), 38-41 (NAGH), T128, R142, Q223, T238, and R302. Residue H41 is the Proton donor of the active site. 298–304 (TTTGRRR) provides a ligand contact to substrate. GTP contacts are provided by residues R304, 330 to 332 (KLD), and 412 to 414 (SLG).

The protein belongs to the adenylosuccinate synthetase family. As to quaternary structure, homodimer. It depends on Mg(2+) as a cofactor.

It localises to the cytoplasm. The enzyme catalyses IMP + L-aspartate + GTP = N(6)-(1,2-dicarboxyethyl)-AMP + GDP + phosphate + 2 H(+). It functions in the pathway purine metabolism; AMP biosynthesis via de novo pathway; AMP from IMP: step 1/2. Its function is as follows. Plays an important role in the de novo pathway of purine nucleotide biosynthesis. Catalyzes the first committed step in the biosynthesis of AMP from IMP. The polypeptide is Adenylosuccinate synthetase (Thermosynechococcus vestitus (strain NIES-2133 / IAM M-273 / BP-1)).